Here is a 216-residue protein sequence, read N- to C-terminus: Uracil phosphoribosyltransferase (216 aa).

5-phospho-alpha-D-ribose 1-diphosphate contacts are provided by residues R81, R106, and 135-143 (DPMLATGSS). Residues I200 and 205-207 (GDA) each bind uracil. A 5-phospho-alpha-D-ribose 1-diphosphate-binding site is contributed by D206.

It belongs to the UPRTase family. Mg(2+) serves as cofactor.

It carries out the reaction UMP + diphosphate = 5-phospho-alpha-D-ribose 1-diphosphate + uracil. It participates in pyrimidine metabolism; UMP biosynthesis via salvage pathway; UMP from uracil: step 1/1. Its activity is regulated as follows. Allosterically activated by GTP. Its function is as follows. Catalyzes the conversion of uracil and 5-phospho-alpha-D-ribose 1-diphosphate (PRPP) to UMP and diphosphate. The polypeptide is Uracil phosphoribosyltransferase (upp) (Porphyromonas gingivalis (strain ATCC 33277 / DSM 20709 / CIP 103683 / JCM 12257 / NCTC 11834 / 2561)).